Consider the following 166-residue polypeptide: UPF0260 protein GbCGDNIH1_2046 (166 aa).

A disordered region spans residues 147-166 (RFPRPRRPRQEPAGKTADES). Positions 154–166 (PRQEPAGKTADES) are enriched in basic and acidic residues.

Belongs to the UPF0260 family.

This is UPF0260 protein GbCGDNIH1_2046 from Granulibacter bethesdensis (strain ATCC BAA-1260 / CGDNIH1).